Consider the following 416-residue polypeptide: Catalase-peroxidase 2 (416 aa).

Positions 1 to 20 are cleaved as a signal peptide; it reads MLLPLIVFLLSVLIHHRIYS.

This sequence belongs to the peroxidase family. Peroxidase/catalase subfamily. As to quaternary structure, homodimer or homotetramer. The cofactor is heme b. In terms of processing, formation of the three residue Trp-Tyr-Met cross-link is important for the catalase, but not the peroxidase activity of the enzyme.

It catalyses the reaction H2O2 + AH2 = A + 2 H2O. The catalysed reaction is 2 H2O2 = O2 + 2 H2O. Bifunctional enzyme with both catalase and broad-spectrum peroxidase activity. The sequence is that of Catalase-peroxidase 2 (katG2) from Alkaliphilus metalliredigens (strain QYMF).